Consider the following 281-residue polypeptide: NH(3)-dependent NAD(+) synthetase (281 aa).

24-31 (GVSGGVDS) contacts ATP. Asp-30 lines the Mg(2+) pocket. Deamido-NAD(+) is bound at residue Arg-145. Position 165 (Thr-165) interacts with ATP. Glu-170 contacts Mg(2+). Lys-178 and Asp-185 together coordinate deamido-NAD(+). The ATP site is built by Lys-194 and Ser-216.

This sequence belongs to the NAD synthetase family. In terms of assembly, homodimer.

It carries out the reaction deamido-NAD(+) + NH4(+) + ATP = AMP + diphosphate + NAD(+) + H(+). The protein operates within cofactor biosynthesis; NAD(+) biosynthesis; NAD(+) from deamido-NAD(+) (ammonia route): step 1/1. Catalyzes the ATP-dependent amidation of deamido-NAD to form NAD. Uses ammonia as a nitrogen source. This Thermotoga maritima (strain ATCC 43589 / DSM 3109 / JCM 10099 / NBRC 100826 / MSB8) protein is NH(3)-dependent NAD(+) synthetase (nadE1).